The chain runs to 202 residues: tRNA (guanine-N(7)-)-methyltransferase (202 aa).

Glu-34, Glu-59, Asp-86, and Asp-107 together coordinate S-adenosyl-L-methionine. Asp-107 is a catalytic residue. Residues Lys-111, Asp-143, and 181-184 (TDYE) each bind substrate.

It belongs to the class I-like SAM-binding methyltransferase superfamily. TrmB family.

It catalyses the reaction guanosine(46) in tRNA + S-adenosyl-L-methionine = N(7)-methylguanosine(46) in tRNA + S-adenosyl-L-homocysteine. It participates in tRNA modification; N(7)-methylguanine-tRNA biosynthesis. Catalyzes the formation of N(7)-methylguanine at position 46 (m7G46) in tRNA. This chain is tRNA (guanine-N(7)-)-methyltransferase, found in Metamycoplasma hominis (strain ATCC 23114 / DSM 25592 / NBRC 14850 / NCTC 10111 / PG21) (Mycoplasma hominis).